The following is an 807-amino-acid chain: Dual specificity protein kinase YAK1 (807 aa).

Low complexity predominate over residues 1–19 (MNSSNNNDSSSSNSNMNNS). A disordered region spans residues 1-84 (MNSSNNNDSS…QQQQQQQQNS (84 aa)). Positions 20–31 (LSPTLVTHSDAS) are enriched in polar residues. Phosphoserine is present on Ser-38. The span at 55-84 (NQGSQRSPQQQHQNHHQQQQQQQQQQQQNS) shows a compositional bias: low complexity. Residues Ser-115, Ser-118, and Ser-127 each carry the phosphoserine modification. Residues 124–180 (RRKSSLVVPPARAPAPNPFQYDSYPAYTSSNTSLAGNSSGQYPSGYQQQQQQVYQQG) are disordered. Over residues 149 to 160 (AYTSSNTSLAGN) the composition is skewed to polar residues. The segment covering 161–180 (SSGQYPSGYQQQQQQVYQQG) has biased composition (low complexity). Ser-206 bears the Phosphoserine mark. Over residues 214-224 (SNFSSLNSNTN) the composition is skewed to low complexity. Residues 214–254 (SNFSSLNSNTNQGTNSIPVMSPYRRLSAYPPSTSPPLQPPF) form a disordered region. A phosphoserine mark is found at Ser-240, Ser-245, and Ser-247. Thr-288 carries the post-translational modification Phosphothreonine. Ser-295 carries the phosphoserine modification. The Protein kinase domain occupies 369–704 (YLVLDILGQG…PQQAMLHPFI (336 aa)). ATP is bound by residues 375–383 (LGQGTFGQV) and Lys-398. Catalysis depends on Asp-496, which acts as the Proton acceptor. Tyr-530 bears the Phosphotyrosine mark. The tract at residues 714 to 758 (FPPGSSLPGPSEKHDDAKGQQSEYGSANDSSNNAGHNYVYNPSSA) is disordered. Residues 732 to 758 (GQQSEYGSANDSSNNAGHNYVYNPSSA) are compositionally biased toward polar residues.

This sequence belongs to the protein kinase superfamily. CMGC Ser/Thr protein kinase family. MNB/DYRK subfamily. Post-translationally, phosphorylated; highly.

It localises to the cytoplasm. The protein localises to the nucleus. The enzyme catalyses L-seryl-[protein] + ATP = O-phospho-L-seryl-[protein] + ADP + H(+). It catalyses the reaction L-threonyl-[protein] + ATP = O-phospho-L-threonyl-[protein] + ADP + H(+). The catalysed reaction is L-tyrosyl-[protein] + ATP = O-phospho-L-tyrosyl-[protein] + ADP + H(+). In terms of biological role, negative regulator of the cell cycle acting downstream of the cAMP-dependent protein kinase. Part of a glucose-sensing system involved in growth control in response to glucose availability. Phosphorylates POP2. This chain is Dual specificity protein kinase YAK1 (YAK1), found in Saccharomyces cerevisiae (strain ATCC 204508 / S288c) (Baker's yeast).